Here is a 763-residue protein sequence, read N- to C-terminus: Phosphoglycerol transferase I (763 aa).

A run of 4 helical transmembrane segments spans residues 4-19 (LLSV…IYAW), 26-48 (WWFA…LYAS), 76-98 (YILP…GWVL), and 110-132 (YSLL…RQIT).

Belongs to the OpgB family.

The protein resides in the cell inner membrane. The enzyme catalyses a phosphatidylglycerol + a membrane-derived-oligosaccharide D-glucose = a 1,2-diacyl-sn-glycerol + a membrane-derived-oligosaccharide 6-(glycerophospho)-D-glucose.. The protein operates within glycan metabolism; osmoregulated periplasmic glucan (OPG) biosynthesis. In terms of biological role, transfers a phosphoglycerol residue from phosphatidylglycerol to the membrane-bound nascent glucan backbones. The protein is Phosphoglycerol transferase I of Salmonella typhi.